The primary structure comprises 686 residues: Pollen receptor-like kinase 5 (686 aa).

The signal sequence occupies residues 1 to 39 (MRNWEDPFTLACNTALKKNLPSCIFIIIFISVLCPVAMS). The Extracellular portion of the chain corresponds to 40–283 (QVVVPDSDAD…GKKAGSFYTL (244 aa)). N60 carries an N-linked (GlcNAc...) asparagine glycan. LRR repeat units follow at residues 112 to 135 (MKNL…VKRF), 136 to 159 (TSLK…AFLG), 161 to 184 (PLLK…LASL), 185 to 208 (PMLL…QQKD), and 210 to 230 (KLAS…LRNM). The helical transmembrane segment at 284–304 (AIILIVIGIILVIIALVFCFV) threads the bilayer. Residues 305 to 686 (QSRRRNFLSA…DDDFGFSMNR (382 aa)) are Cytoplasmic-facing. Residues 328–339 (NYHQSTNKNNKP) show a composition bias toward polar residues. Residues 328 to 355 (NYHQSTNKNNKPAESVNHTRRGSMPDPG) form a disordered region. In terms of domain architecture, Protein kinase spans 375–648 (RASAEVLGSG…REVVEMVEML (274 aa)). The residue at position 377 (S377) is a Phosphoserine. Residues 381 to 389 (LGSGTFGAS) and K403 each bind ATP. Residues S455 and S458 each carry the phosphoserine modification. Position 472 is a phosphothreonine (T472). Y542 is modified (phosphotyrosine). A Phosphoserine modification is found at S545.

It belongs to the protein kinase superfamily. Ser/Thr protein kinase family. In terms of assembly, interacts with the GRI peptide. In terms of tissue distribution, expressed in pollen and/or in flowers. Detected at low levels in leaves.

The protein localises to the cell membrane. It carries out the reaction L-seryl-[protein] + ATP = O-phospho-L-seryl-[protein] + ADP + H(+). The catalysed reaction is L-threonyl-[protein] + ATP = O-phospho-L-threonyl-[protein] + ADP + H(+). In terms of biological role, receptor-like kinase involved in the control of pollen germination and pollen tube polar growth. The extracellular domain serves as a sensor for peptides derived from GRI. May act as a downstream element for ROS-dependent cell death induced by GRI. This is Pollen receptor-like kinase 5 from Arabidopsis thaliana (Mouse-ear cress).